Consider the following 883-residue polypeptide: Bifunctional heparan sulfate N-deacetylase/N-sulfotransferase 2 (883 aa).

Residues methionine 1–arginine 18 are Cytoplasmic-facing. A helical; Signal-anchor for type II membrane protein transmembrane segment spans residues leucine 19–serine 39. Topologically, residues threonine 40–glycine 883 are lumenal. Residues serine 41–glutamate 597 form a heparan sulfate N-deacetylase 2 region. The interval proline 49–alanine 81 is disordered. Residues proline 65–proline 78 are compositionally biased toward pro residues. N-linked (GlcNAc...) asparagine glycans are attached at residues asparagine 233, asparagine 350, and asparagine 400. Residues lysine 598–glycine 883 form a heparan sulfate N-sulfotransferase 2 region. Lysine 613 serves as the catalytic For sulfotransferase activity. Lysine 613–threonine 617 is a binding site for 3'-phosphoadenylyl sulfate. An N-linked (GlcNAc...) asparagine glycan is attached at asparagine 666. Serine 711 is a binding site for 3'-phosphoadenylyl sulfate. 2 N-linked (GlcNAc...) asparagine glycosylation sites follow: asparagine 726 and asparagine 802. A disulfide bridge links cysteine 817 with cysteine 827. Lysine 832–tyrosine 836 contacts 3'-phosphoadenylyl sulfate.

Belongs to the sulfotransferase 1 family. NDST subfamily. As to quaternary structure, monomer.

It is found in the golgi apparatus membrane. The enzyme catalyses alpha-D-glucosaminyl-[heparan sulfate](n) + 3'-phosphoadenylyl sulfate = N-sulfo-alpha-D-glucosaminyl-[heparan sulfate](n) + adenosine 3',5'-bisphosphate + 2 H(+). Its pathway is glycan metabolism; heparan sulfate biosynthesis. The protein operates within glycan metabolism; heparin biosynthesis. Its function is as follows. Essential bifunctional enzyme that catalyzes both the N-deacetylation and the N-sulfation of glucosamine (GlcNAc) of the glycosaminoglycan in heparan sulfate. Modifies the GlcNAc-GlcA disaccharide repeating sugar backbone to make N-sulfated heparosan, a prerequisite substrate for later modifications in heparin biosynthesis. Plays a role in determining the extent and pattern of sulfation of heparan sulfate. Required for the exosomal release of SDCBP, CD63 and syndecan. In Homo sapiens (Human), this protein is Bifunctional heparan sulfate N-deacetylase/N-sulfotransferase 2 (NDST2).